The primary structure comprises 124 residues: MADDLKRFLYKKLPSVEGLHAIVVSDRDGVPVIKVANDNAPEHALRPGFLSTFALATDQGSKLGLSKNKSTICYYNTYQVVQFNRLPLVVSFIASSSANTGLIVSLEKELAPLFEELRRVVEVS.

The segment at 57 to 70 is required for interaction with LAMTOR2; it reads TDQGSKLGLSKNKS.

The protein belongs to the LAMTOR3 family. As to quaternary structure, part of the Ragulator complex composed of LAMTOR1, LAMTOR2, LAMTOR3, LAMTOR4 and LAMTOR5. LAMTOR4 and LAMTOR5 form a heterodimer that interacts, through LAMTOR1, with a LAMTOR2, LAMTOR3 heterodimer. Interacts with LAMTOR1 and LAMTOR2; the interaction is direct. The Ragulator complex interacts with both the mTORC1 complex and heterodimers constituted of the Rag GTPases RagA/RRAGA, RagB/RRAGB, RagC/RRAGC and RagD/RRAGD; regulated by amino acid availability. The Ragulator complex interacts with SLC38A9; the probable amino acid sensor. Component of the lysosomal folliculin complex (LFC), composed of FLCN, FNIP1 (or FNIP2), RagA/RRAGA or RagB/RRAGB GDP-bound, RagC/RRAGC or RagD/RRAGD GTP-bound, and Ragulator. Interacts with MAP2K1/MEK1 and MAPK2. Interacts with MORG1.

Its subcellular location is the late endosome membrane. In terms of biological role, as part of the Ragulator complex it is involved in amino acid sensing and activation of mTORC1, a signaling complex promoting cell growth in response to growth factors, energy levels, and amino acids. Activated by amino acids through a mechanism involving the lysosomal V-ATPase, the Ragulator plays a dual role for the small GTPases Rag (RagA/RRAGA, RagB/RRAGB, RagC/RRAGC and/or RagD/RRAGD): it (1) acts as a guanine nucleotide exchange factor (GEF), activating the small GTPases Rag and (2) mediates recruitment of Rag GTPases to the lysosome membrane. Activated Ragulator and Rag GTPases function as a scaffold recruiting mTORC1 to lysosomes where it is in turn activated. Adapter protein that enhances the efficiency of the MAP kinase cascade facilitating the activation of MAPK2. This Pongo abelii (Sumatran orangutan) protein is Ragulator complex protein LAMTOR3 (LAMTOR3).